The sequence spans 901 residues: Alanine--tRNA ligase (901 aa).

Residues H581, H585, C684, and H688 each contribute to the Zn(2+) site.

The protein belongs to the class-II aminoacyl-tRNA synthetase family. Zn(2+) is required as a cofactor.

The protein localises to the cytoplasm. The catalysed reaction is tRNA(Ala) + L-alanine + ATP = L-alanyl-tRNA(Ala) + AMP + diphosphate. Catalyzes the attachment of alanine to tRNA(Ala) in a two-step reaction: alanine is first activated by ATP to form Ala-AMP and then transferred to the acceptor end of tRNA(Ala). Also edits incorrectly charged Ser-tRNA(Ala) and Gly-tRNA(Ala) via its editing domain. The protein is Alanine--tRNA ligase of Mycobacterium ulcerans (strain Agy99).